Consider the following 481-residue polypeptide: Protein DETOXIFICATION 12 (481 aa).

The next 12 helical transmembrane spans lie at 38–58 (LIFF…LQIV), 76–96 (LASS…SCAL), 117–137 (YTAM…WFNM), 154–174 (AGKY…LQPL), 187–207 (LLIT…FLVY), 214–234 (LGGA…LGSF), 267–287 (AAMI…SGLL), 296–316 (VLSV…AIAA), 336–356 (IVVY…SMSL), 380–400 (MAPL…LSGI), 415–435 (LGAF…WIHL), and 438–458 (VGLW…LALV).

The protein belongs to the multi antimicrobial extrusion (MATE) (TC 2.A.66.1) family.

It localises to the membrane. The sequence is that of Protein DETOXIFICATION 12 from Arabidopsis thaliana (Mouse-ear cress).